Reading from the N-terminus, the 137-residue chain is Probable leaf thionin (137 aa).

Positions 1 to 28 (MATNKSIKSVVICVLILGLVLEQVQVEG) are cleaved as a signal peptide. 4 disulfide bridges follow: Cys-31/Cys-68, Cys-32/Cys-60, Cys-40/Cys-58, and Cys-44/Cys-54. A propeptide spans 75–137 (LNLLPESGEP…DGDVIQSVEA (63 aa)) (acidic domain).

It belongs to the plant thionin (TC 1.C.44) family. 4 C-C subfamily.

Its subcellular location is the secreted. In terms of biological role, thionins are small plant proteins which are toxic to animal cells. They seem to exert their toxic effect at the level of the cell membrane. Their precise function is not known. This Hordeum vulgare (Barley) protein is Probable leaf thionin.